The chain runs to 316 residues: Pantothenate kinase (316 aa).

95–102 is a binding site for ATP; that stretch reads GSVAVGKS.

Belongs to the prokaryotic pantothenate kinase family.

It localises to the cytoplasm. The enzyme catalyses (R)-pantothenate + ATP = (R)-4'-phosphopantothenate + ADP + H(+). The protein operates within cofactor biosynthesis; coenzyme A biosynthesis; CoA from (R)-pantothenate: step 1/5. The polypeptide is Pantothenate kinase (Klebsiella pneumoniae (strain 342)).